The primary structure comprises 230 residues: Uracil-DNA glycosylase (230 aa).

Aspartate 70 acts as the Proton acceptor in catalysis.

The protein belongs to the uracil-DNA glycosylase (UDG) superfamily. UNG family.

It is found in the cytoplasm. The enzyme catalyses Hydrolyzes single-stranded DNA or mismatched double-stranded DNA and polynucleotides, releasing free uracil.. Functionally, excises uracil residues from the DNA which can arise as a result of misincorporation of dUMP residues by DNA polymerase or due to deamination of cytosine. In Pseudomonas putida (strain ATCC 700007 / DSM 6899 / JCM 31910 / BCRC 17059 / LMG 24140 / F1), this protein is Uracil-DNA glycosylase.